We begin with the raw amino-acid sequence, 390 residues long: L-seryl-tRNA(Sec) selenium transferase (390 aa).

Lys-225 bears the N6-(pyridoxal phosphate)lysine mark.

The protein belongs to the SelA family. Requires pyridoxal 5'-phosphate as cofactor.

It localises to the cytoplasm. It catalyses the reaction L-seryl-tRNA(Sec) + selenophosphate + H(+) = L-selenocysteinyl-tRNA(Sec) + phosphate. It functions in the pathway aminoacyl-tRNA biosynthesis; selenocysteinyl-tRNA(Sec) biosynthesis; selenocysteinyl-tRNA(Sec) from L-seryl-tRNA(Sec) (bacterial route): step 1/1. Functionally, converts seryl-tRNA(Sec) to selenocysteinyl-tRNA(Sec) required for selenoprotein biosynthesis. The protein is L-seryl-tRNA(Sec) selenium transferase of Helicobacter pylori (strain J99 / ATCC 700824) (Campylobacter pylori J99).